The sequence spans 252 residues: Triosephosphate isomerase (252 aa).

A substrate-binding site is contributed by 10 to 12 (NWK). Histidine 96 functions as the Electrophile in the catalytic mechanism. Glutamate 168 functions as the Proton acceptor in the catalytic mechanism. Substrate contacts are provided by residues glycine 174, serine 214, and 235–236 (GG).

This sequence belongs to the triosephosphate isomerase family. Homodimer.

It is found in the cytoplasm. It carries out the reaction D-glyceraldehyde 3-phosphate = dihydroxyacetone phosphate. The protein operates within carbohydrate biosynthesis; gluconeogenesis. Its pathway is carbohydrate degradation; glycolysis; D-glyceraldehyde 3-phosphate from glycerone phosphate: step 1/1. Involved in the gluconeogenesis. Catalyzes stereospecifically the conversion of dihydroxyacetone phosphate (DHAP) to D-glyceraldehyde-3-phosphate (G3P). The polypeptide is Triosephosphate isomerase (Streptococcus gordonii (strain Challis / ATCC 35105 / BCRC 15272 / CH1 / DL1 / V288)).